Consider the following 567-residue polypeptide: Dihydroxy-acid dehydratase (567 aa).

Cys52 provides a ligand contact to [2Fe-2S] cluster. Residue Asp84 coordinates Mg(2+). Cys125 serves as a coordination point for [2Fe-2S] cluster. Residues Asp126 and Lys127 each contribute to the Mg(2+) site. Residue Lys127 is modified to N6-carboxylysine. Cys197 provides a ligand contact to [2Fe-2S] cluster. Glu448 is a binding site for Mg(2+). Ser474 functions as the Proton acceptor in the catalytic mechanism.

Belongs to the IlvD/Edd family. As to quaternary structure, homodimer. Requires [2Fe-2S] cluster as cofactor. Mg(2+) serves as cofactor.

The enzyme catalyses (2R)-2,3-dihydroxy-3-methylbutanoate = 3-methyl-2-oxobutanoate + H2O. It carries out the reaction (2R,3R)-2,3-dihydroxy-3-methylpentanoate = (S)-3-methyl-2-oxopentanoate + H2O. It participates in amino-acid biosynthesis; L-isoleucine biosynthesis; L-isoleucine from 2-oxobutanoate: step 3/4. Its pathway is amino-acid biosynthesis; L-valine biosynthesis; L-valine from pyruvate: step 3/4. Functionally, functions in the biosynthesis of branched-chain amino acids. Catalyzes the dehydration of (2R,3R)-2,3-dihydroxy-3-methylpentanoate (2,3-dihydroxy-3-methylvalerate) into 2-oxo-3-methylpentanoate (2-oxo-3-methylvalerate) and of (2R)-2,3-dihydroxy-3-methylbutanoate (2,3-dihydroxyisovalerate) into 2-oxo-3-methylbutanoate (2-oxoisovalerate), the penultimate precursor to L-isoleucine and L-valine, respectively. This is Dihydroxy-acid dehydratase from Streptococcus pneumoniae serotype 2 (strain D39 / NCTC 7466).